The following is a 293-amino-acid chain: MFLARNAGRAGYRGVVAYQQAASFSVSSAKAAGSRSSGGSDAGDYAREAAEHAKAGLKDLKNEASWKAKGVANQAAGAFERAKDTVKEGVHDMKRSGSRVFEQGQEEVEAGAQHAKAGYQSAKNAAQDTAATLKDKAGSAWNQAKHVVEDKGEDVVEAVKDTASKVWGKAKHVAEDVKENAQSPGGIADKASDVWSAAKDKAADVLSGAKHTAENLAHKAQAAIHDATASSGSQSQSQSQSQYRQGQQQGRQDQQQSKSQWGQTSPQSPDGFRPQAGQGPQGGKGPGQAGGRR.

The N-terminal 31 residues, 1–31, are a transit peptide targeting the mitochondrion; sequence MFLARNAGRAGYRGVVAYQQAASFSVSSAKA. Low complexity predominate over residues 27 to 43; that stretch reads SSAKAAGSRSSGGSDAG. Residues 27 to 52 form a disordered region; it reads SSAKAAGSRSSGGSDAGDYAREAAEH. LEA 11-mer repeat repeat units lie at residues 58 to 68, 83 to 93, 123 to 133, 134 to 144, 145 to 155, 160 to 170, 171 to 181, 199 to 209, and 210 to 220; these read KDLKNEASWKA, KDTVKEGVHDM, KNAAQDTAATL, KDKAGSAWNQA, KHVVEDKGEDV, KDTASKVWGKA, KHVAEDVKENA, KDKAADVLSGA, and KHTAENLAHKA. The disordered stretch occupies residues 217-293; it reads AHKAQAAIHD…KGPGQAGGRR (77 aa). Low complexity predominate over residues 230 to 265; the sequence is SSGSQSQSQSQSQYRQGQQQGRQDQQQSKSQWGQTS. Residues 279–293 show a composition bias toward gly residues; the sequence is GPQGGKGPGQAGGRR.

Belongs to the LEA type 4 family.

It localises to the mitochondrion. Its function is as follows. Mitochondrial heat soluble protein acting as a molecular shield in water-deficient condition. The chain is Group 3 late-embryogenesis abundant protein, mitochondrial from Ramazzottius varieornatus (Water bear).